The sequence spans 101 residues: MAKTSMKNRELKRQQTVAKYAKKRAELKAIIANPNSTPEARWEAQVALQKQPRDASASRLRNRCRITGRPHGVYRKFGLSRNKLREAAMRGDVPGLVKASW.

Belongs to the universal ribosomal protein uS14 family. In terms of assembly, part of the 30S ribosomal subunit. Contacts proteins S3 and S10.

Binds 16S rRNA, required for the assembly of 30S particles and may also be responsible for determining the conformation of the 16S rRNA at the A site. The protein is Small ribosomal subunit protein uS14 of Ectopseudomonas mendocina (strain ymp) (Pseudomonas mendocina).